The following is a 285-amino-acid chain: Glutamate racemase (285 aa).

Substrate is bound by residues 28-29 and 60-61; these read DS and YG. The active-site Proton donor/acceptor is Cys-92. 93–94 lines the substrate pocket; that stretch reads NT. Cys-204 acts as the Proton donor/acceptor in catalysis. 205-206 is a binding site for substrate; it reads TH.

It belongs to the aspartate/glutamate racemases family.

It carries out the reaction L-glutamate = D-glutamate. Its pathway is cell wall biogenesis; peptidoglycan biosynthesis. Its function is as follows. Provides the (R)-glutamate required for cell wall biosynthesis. The protein is Glutamate racemase of Escherichia coli (strain UTI89 / UPEC).